Here is a 339-residue protein sequence, read N- to C-terminus: Nitrilase 2 (339 aa).

Position 2 is an N-acetylserine (Ser-2). One can recognise a CN hydrolase domain in the interval 18-290 (VRATIVQAST…EGLITADLDL (273 aa)). Glu-58 (proton acceptor) is an active-site residue. The active-site Proton donor is the Lys-145. Cys-179 serves as the catalytic Nucleophile.

Belongs to the carbon-nitrogen hydrolase superfamily. Nitrilase family.

Its subcellular location is the cell membrane. It catalyses the reaction a nitrile + 2 H2O = a carboxylate + NH4(+). Functionally, can convert indole-3-acetonitrile to the plant hormone indole-3-acetic acid. The sequence is that of Nitrilase 2 (NIT2) from Arabidopsis thaliana (Mouse-ear cress).